Reading from the N-terminus, the 306-residue chain is MPKVTKEKKSRIHNDVQKQGIVFNKDFGQHILKNPLVITTMLEKAALRATDVVLEIGPGTGNMTVRMLERAKKVIACEIDTRLAAELQKRVQATPLQPKLQVLIGDFLKAELPFFDLCIANVPYQISSPLIFKLLLHRPLFRCAVLMFQREFAERLVAKPGDKLYCRLSINTQLLARVDMLMKVGKNNFRPPPKVESSVVRLEPKNPPPPVNFTEWDGLTRIAFLRKNKTLAATFKVTSVLEMLEKNYKLYRSLRNEPIEDDFKMQDKVISILEEQDMAAKRARSMDIDDFMRLLLAFNSAGIHFN.

6 residues coordinate S-adenosyl-L-methionine: His-30, Leu-32, Gly-57, Glu-78, Asp-106, and Asn-121.

It belongs to the class I-like SAM-binding methyltransferase superfamily. rRNA adenine N(6)-methyltransferase family. As to quaternary structure, part of the small subunit (SSU) processome, composed of more than 70 proteins and the RNA chaperone small nucleolar RNA (snoRNA) U3.

Its subcellular location is the nucleus. It localises to the nucleolus. It carries out the reaction adenosine(1779)/adenosine(1780) in 18S rRNA + 4 S-adenosyl-L-methionine = N(6)-dimethyladenosine(1779)/N(6)-dimethyladenosine(1780) in 18S rRNA + 4 S-adenosyl-L-homocysteine + 4 H(+). Specifically dimethylates two adjacent adenosines in the loop of a conserved hairpin near the 3'-end of 18S rRNA in the 40S particle. Involved in the pre-rRNA processing steps leading to small-subunit rRNA production independently of its RNA-modifying catalytic activity. Part of the small subunit (SSU) processome, first precursor of the small eukaryotic ribosomal subunit. During the assembly of the SSU processome in the nucleolus, many ribosome biogenesis factors, an RNA chaperone and ribosomal proteins associate with the nascent pre-rRNA and work in concert to generate RNA folding, modifications, rearrangements and cleavage as well as targeted degradation of pre-ribosomal RNA by the RNA exosome. The sequence is that of Probable dimethyladenosine transferase from Drosophila melanogaster (Fruit fly).